The following is a 337-amino-acid chain: Phosphate acyltransferase (337 aa).

Belongs to the PlsX family. As to quaternary structure, homodimer. Probably interacts with PlsY.

Its subcellular location is the cytoplasm. The catalysed reaction is a fatty acyl-[ACP] + phosphate = an acyl phosphate + holo-[ACP]. It participates in lipid metabolism; phospholipid metabolism. Its function is as follows. Catalyzes the reversible formation of acyl-phosphate (acyl-PO(4)) from acyl-[acyl-carrier-protein] (acyl-ACP). This enzyme utilizes acyl-ACP as fatty acyl donor, but not acyl-CoA. In Halalkalibacterium halodurans (strain ATCC BAA-125 / DSM 18197 / FERM 7344 / JCM 9153 / C-125) (Bacillus halodurans), this protein is Phosphate acyltransferase.